The following is a 176-amino-acid chain: Protein FimF (176 aa).

An N-terminal signal peptide occupies residues 1–20 (MRNKPFYLLCAFLWLAVSHA). A disulfide bridge connects residues Cys38 and Cys78.

The protein belongs to the fimbrial protein family.

The protein resides in the fimbrium. Involved in regulation of length and mediation of adhesion of type 1 fimbriae (but not necessary for the production of fimbriae). Involved in the integration of FimH in the fimbriae. The chain is Protein FimF (fimF) from Escherichia coli (strain K12).